A 104-amino-acid polypeptide reads, in one-letter code: Nucleoid-associated protein LSL_1227 (104 aa).

Over residues 1–19 (MMMRGMNMQSMMKQMQKLQ) the composition is skewed to low complexity. The segment at 1–24 (MMMRGMNMQSMMKQMQKLQKNMKK) is disordered.

It belongs to the YbaB/EbfC family. In terms of assembly, homodimer.

Its subcellular location is the cytoplasm. The protein resides in the nucleoid. Functionally, binds to DNA and alters its conformation. May be involved in regulation of gene expression, nucleoid organization and DNA protection. The protein is Nucleoid-associated protein LSL_1227 of Ligilactobacillus salivarius (strain UCC118) (Lactobacillus salivarius).